A 204-amino-acid polypeptide reads, in one-letter code: High frequency lysogenization protein HflD homolog (204 aa).

The protein belongs to the HflD family.

It localises to the cytoplasm. The protein resides in the cell inner membrane. The polypeptide is High frequency lysogenization protein HflD homolog (Stenotrophomonas maltophilia (strain K279a)).